The chain runs to 1086 residues: Tudor domain-containing protein 7 (1086 aa).

HTH OST-type domains lie at 3–76 and 222–291; these read EADL…YAVA and KMDE…YPAR. Positions 295–306 are enriched in basic and acidic residues; the sequence is PLKSDQDPEKEL. The tract at residues 295-324 is disordered; the sequence is PLKSDQDPEKELPPPPPAPKQEVPSQGSPA. Residues 325 to 394 enclose the HTH OST-type 3 domain; sequence VMPDVKEKVA…TQKAILYAKL (70 aa). Tudor domains are found at residues 501 to 558 and 691 to 748; these read TVHV…FCSL and LPFC…FLQE. Residues 844 to 866 are disordered; it reads AASSPGNRNGGTPAPGSPAESLR. Phosphoserine is present on Ser-847. The interval 849-1086 is interaction with CDK17; the sequence is GNRNGGTPAP…QYLLELSKVN (238 aa). The interaction with CABLES1 stretch occupies residues 881–1086; it reads TSSFSLEELP…QYLLELSKVN (206 aa).

Belongs to the TDRD7 family. In terms of assembly, found in a mRNP complex, at least composed of TDRD1, TDRD6, TDRD7 and DDX4. Found in a complex containing CABLES1, CDK16 and CDK17. Interacts with CABLES1, CDK17 and PIWIL1. In terms of tissue distribution, mainly expressed in testis. Expressed in spermatogonia, spermatocytes and round spermatids (at protein level). Also expressed in the developing lens.

The protein resides in the cytoplasm. Functionally, component of specific cytoplasmic RNA granules involved in post-transcriptional regulation of specific genes: probably acts by binding to specific mRNAs and regulating their translation. Required for lens transparency during lens development, by regulating translation of genes such as CRYBB3 and HSPB1 in the developing lens. Also required during spermatogenesis. In Mus musculus (Mouse), this protein is Tudor domain-containing protein 7 (Tdrd7).